Consider the following 292-residue polypeptide: Aspartate carbamoyltransferase catalytic subunit (292 aa).

2 residues coordinate carbamoyl phosphate: arginine 49 and threonine 50. Lysine 77 contacts L-aspartate. 3 residues coordinate carbamoyl phosphate: arginine 99, histidine 127, and glutamine 130. L-aspartate is bound by residues arginine 161 and arginine 211. Residues glycine 250 and proline 251 each contribute to the carbamoyl phosphate site.

This sequence belongs to the aspartate/ornithine carbamoyltransferase superfamily. ATCase family. Heterododecamer (2C3:3R2) of six catalytic PyrB chains organized as two trimers (C3), and six regulatory PyrI chains organized as three dimers (R2).

The enzyme catalyses carbamoyl phosphate + L-aspartate = N-carbamoyl-L-aspartate + phosphate + H(+). The protein operates within pyrimidine metabolism; UMP biosynthesis via de novo pathway; (S)-dihydroorotate from bicarbonate: step 2/3. Its function is as follows. Catalyzes the condensation of carbamoyl phosphate and aspartate to form carbamoyl aspartate and inorganic phosphate, the committed step in the de novo pyrimidine nucleotide biosynthesis pathway. The protein is Aspartate carbamoyltransferase catalytic subunit of Campylobacter lari (strain RM2100 / D67 / ATCC BAA-1060).